The primary structure comprises 355 residues: 6-aminohexanoate-oligomer endohydrolase (355 aa).

Residue T267 is the Nucleophile of the active site.

It belongs to the peptidase S58 family. Heterotetramer composed of 4 alpha/beta heterodimers. Expressed as an inactive precursor that is cleaved autocatalytically at Asn266/Thr267 to generate an active enzyme composed of an alpha subunit and a beta subunit.

The enzyme catalyses [N-(6-aminohexanoyl)]n + H2O = [N-(6-aminohexanoyl)]n-x + [N-(6-aminohexanoyl)]x.. It functions in the pathway xenobiotic degradation; nylon-6 oligomer degradation. Involved in the degradation of nylon-6 oligomers. Degrades cyclic and linear oligomers of 6-aminohexanoate (Ahx) with a degree of polymerization greater than three by an endo-type mode. Cannot use Ahx cyclic dimer or the Ahx linear dimer. The chain is 6-aminohexanoate-oligomer endohydrolase from Agromyces sp. (strain KY5R).